The sequence spans 249 residues: 5'-nucleotidase SurE (249 aa).

The a divalent metal cation site is built by aspartate 8, aspartate 9, serine 39, and asparagine 91.

The protein belongs to the SurE nucleotidase family. Requires a divalent metal cation as cofactor.

The protein resides in the cytoplasm. The catalysed reaction is a ribonucleoside 5'-phosphate + H2O = a ribonucleoside + phosphate. Functionally, nucleotidase that shows phosphatase activity on nucleoside 5'-monophosphates. This is 5'-nucleotidase SurE from Azotobacter vinelandii (strain DJ / ATCC BAA-1303).